Consider the following 70-residue polypeptide: DNA-directed RNA polymerase subunit epsilon (70 aa).

This sequence belongs to the RNA polymerase subunit epsilon family. As to quaternary structure, RNAP is composed of a core of 2 alpha, a beta and a beta' subunit. The core is associated with a delta subunit, and at least one of epsilon or omega. When a sigma factor is associated with the core the holoenzyme is formed, which can initiate transcription.

The catalysed reaction is RNA(n) + a ribonucleoside 5'-triphosphate = RNA(n+1) + diphosphate. A non-essential component of RNA polymerase (RNAP). The protein is DNA-directed RNA polymerase subunit epsilon of Enterococcus faecalis (strain ATCC 700802 / V583).